Reading from the N-terminus, the 393-residue chain is MALNFNSPTFQSIKTTRRPCSPLRSPRVFMASTLRPPSVEDGNVKKPFSPPREVHVQVTHSMPPEKREIFDSLHGWADNNILVHLKPVEKCWQASDFLPDPASEGFEDQVKELRERCKEIPDDYFVVLVGDMITEEALPTYQTMLNTLDGVRDETGASLTPWAIWTRAWTAEENRHGDLLNKYLYLSGRVDMRQIEKTIQYLIGSGMDPRTENNPYLGFIYTSFQERATFISHGNTARHAKEHGDMKLAQVCGIIAADEKRHETAYTKIVEKLFEVDPDGTVLAVADMMRKKISMPAHLMYDGRDDNLFEHFSTVAQRLGVYTAKDYADILEFLVGRWEIEKLTGLSGEGHKARDYVCGLAPRIRKLEERAQARAKQKAPVPFSWVFGKDIKL.

The transit peptide at 1-30 directs the protein to the chloroplast; it reads MALNFNSPTFQSIKTTRRPCSPLRSPRVFM. Residues Glu-135, Glu-173, His-176, Glu-226, Glu-259, and His-262 each coordinate Fe cation.

It belongs to the fatty acid desaturase type 2 family. Homodimer. The cofactor is Fe(2+).

It is found in the plastid. The protein localises to the chloroplast. It carries out the reaction octadecanoyl-[ACP] + 2 reduced [2Fe-2S]-[ferredoxin] + O2 + 2 H(+) = (9Z)-octadecenoyl-[ACP] + 2 oxidized [2Fe-2S]-[ferredoxin] + 2 H2O. It functions in the pathway lipid metabolism; fatty acid metabolism. Its function is as follows. Converts stearoyl-ACP to oleoyl-ACP by introduction of a cis double bond between carbons 9 and 10 of the acyl chain. The protein is Stearoyl-[acyl-carrier-protein] 9-desaturase, chloroplastic of Solanum commersonii (Commerson's wild potato).